The following is a 191-amino-acid chain: MTQQITLIKDKILSDNYFTLHNITYDLTRKDGEVIRHKREVYDRGNGATILLYNAKKKSVVLIRQFRVATWVNGNESGQLIETCAGLLDNDEPEVCIRKEAIEETGYEVGEVRKLFELYMSPGGVTELIHFFIAEYSDNQRANAGGGVEDEDIEVLELPFSQALEMIKTGEIRDGKTVLLLNYLQMSHLMD.

GDP-alpha-D-mannose contacts are provided by residues Tyr17, 38-40 (KRE), Arg67, and 85-87 (AGL). Residues 43-180 (DRGNGATILL…EIRDGKTVLL (138 aa)) form the Nudix hydrolase domain. Residues Ala85, Glu100, and Glu104 each coordinate Mg(2+). Residues 86-106 (GLLDNDEPEVCIRKEAIEETG) carry the Nudix box motif. GDP-alpha-D-mannose contacts are provided by residues Glu104, Glu127, 150–151 (DE), and Lys176. Mg(2+) is bound at residue Glu151.

This sequence belongs to the Nudix hydrolase family. NudK subfamily. Homodimer. It depends on Mg(2+) as a cofactor.

It carries out the reaction GDP-alpha-D-mannose + H2O = alpha-D-mannose 1-phosphate + GMP + 2 H(+). Its function is as follows. Nucleoside diphosphate sugar hydrolase that hydrolyzes GDP-mannose as its preferred substrate, yielding GMP and mannose-1-phosphate. The sequence is that of GDP-mannose pyrophosphatase (nudK) from Shigella flexneri serotype 5b (strain 8401).